Reading from the N-terminus, the 256-residue chain is Pimeloyl-[acyl-carrier protein] methyl ester esterase (256 aa).

The region spanning 17 to 241 (VYLIHGWGAN…KAAHAPFLSH (225 aa)) is the AB hydrolase-1 domain. Substrate-binding positions include W23, 83 to 84 (SL), and 145 to 149 (FLQLQ). Residue S83 is the Nucleophile of the active site. Active-site residues include D207 and H235. H235 contacts substrate.

This sequence belongs to the AB hydrolase superfamily. Carboxylesterase BioH family. Monomer.

It is found in the cytoplasm. It catalyses the reaction 6-carboxyhexanoyl-[ACP] methyl ester + H2O = 6-carboxyhexanoyl-[ACP] + methanol + H(+). It functions in the pathway cofactor biosynthesis; biotin biosynthesis. In terms of biological role, the physiological role of BioH is to remove the methyl group introduced by BioC when the pimeloyl moiety is complete. It allows to synthesize pimeloyl-ACP via the fatty acid synthetic pathway through the hydrolysis of the ester bonds of pimeloyl-ACP esters. In Neisseria meningitidis serogroup C / serotype 2a (strain ATCC 700532 / DSM 15464 / FAM18), this protein is Pimeloyl-[acyl-carrier protein] methyl ester esterase.